The sequence spans 538 residues: Dolichol kinase (538 aa).

The Lumenal segment spans residues 1-18; that stretch reads MTRECAPPTPGSGAPLSG. Residues 19 to 39 form a helical membrane-spanning segment; that stretch reads SVLAEAAVVFVVVLSIHAAVW. The Cytoplasmic segment spans residues 40–74; sequence DRYSWCAVALAVQAFYVQYKWDRLLQQGSAVFQFR. The chain crosses the membrane as a helical span at residues 75–95; sequence MSANSGLLPASVVMPLLGLVM. At 96–111 the chain is on the lumenal side; it reads KERCQAAGNPYFERFG. The helical transmembrane segment at 112–132 threads the bilayer; the sequence is IVVAATGMAVALFSSVLALGI. Over 133 to 134 the chain is Cytoplasmic; it reads TR. Residues 135 to 155 form a helical membrane-spanning segment; it reads PVPTNTCVISGLAGGVIIYIM. The Lumenal portion of the chain corresponds to 156–163; that stretch reads KHSLSVGE. The helical transmembrane segment at 164–184 threads the bilayer; the sequence is VIEVLEALLIFVYLNMILLYL. The Cytoplasmic segment spans residues 185–188; the sequence is LPRC. Residues 189 to 209 form a helical membrane-spanning segment; the sequence is FTPGEALLVLGGISFMLNQLI. Residues 210 to 224 lie on the Lumenal side of the membrane; that stretch reads KRSLTVVESQGDPLD. The chain crosses the membrane as a helical span at residues 225–245; it reads FFLLVVVVGMVLMGIFFSTLF. Topologically, residues 246-254 are cytoplasmic; sequence VFMDSGTWA. The chain crosses the membrane as a helical span at residues 255-275; it reads SSIFFHLMTCVLGLGVVLPWL. At 276 to 297 the chain is on the lumenal side; that stretch reads HRLIRRNPLLWLFQFLFQTETR. The chain crosses the membrane as a helical span at residues 298–318; sequence VYLLAYWCLLATVACLVVLYQ. Residues 319–337 lie on the Cytoplasmic side of the membrane; the sequence is NAKRSSSESKKHQAPTITR. Residues 338–354 form a helical membrane-spanning segment; that stretch reads KYFHFIVVATYIPGIIL. Over 355–359 the chain is Lumenal; sequence DRPLL. A helical membrane pass occupies residues 360–380; that stretch reads YVAATVCLAVFIFLEYVRYFR. The Cytoplasmic portion of the chain corresponds to 381 to 401; sequence IKPLGHTLRSLLSLFLDERDS. Residues 402–422 traverse the membrane as a helical segment; sequence GPLILTHIYLLLGMSLPIWLV. At 423–436 the chain is on the lumenal side; sequence PRPCTQKGSLGGAR. The helical transmembrane segment at 437–457 threads the bilayer; the sequence is ALVPYAGVLAVGVGDTVASIF. At 458-472 the chain is on the cytoplasmic side; sequence GSTMGEIRWPGTKKT. A CTP-binding region spans residues 459-474; the sequence is STMGEIRWPGTKKTFE. Residues 473–493 traverse the membrane as a helical segment; that stretch reads FEGTMTSIFAQIISVALILIF. Topologically, residues 494–495 are lumenal; it reads DS. Residues 496-516 traverse the membrane as a helical segment; sequence GVDLNYSYAWILGSISTVSLL. Topologically, residues 517–538 are cytoplasmic; that stretch reads EAYTTQIDNLLLPLYLLILLMA.

Belongs to the polyprenol kinase family.

The protein resides in the endoplasmic reticulum membrane. It carries out the reaction a di-trans,poly-cis-dolichol + CTP = a di-trans,poly-cis-dolichyl phosphate + CDP + H(+). Its pathway is protein modification; protein glycosylation. In terms of biological role, catalyzes CTP-mediated phosphorylation of dolichol, the terminal step in de novo dolichyl monophosphate (Dol-P) biosynthesis. Dol-P is a lipid carrier essential for the synthesis of N-linked and O-linked oligosaccharides and for GPI anchors. The chain is Dolichol kinase (DOLK) from Bos taurus (Bovine).